A 106-amino-acid chain; its full sequence is Large ribosomal subunit protein uL24 (106 aa).

Basic and acidic residues predominate over residues 84 to 97; the sequence is EKIGRELGAKEKAR. Residues 84-106 form a disordered region; sequence EKIGRELGAKEKARLQKRKTAAK.

It belongs to the universal ribosomal protein uL24 family. As to quaternary structure, part of the 50S ribosomal subunit.

Functionally, one of two assembly initiator proteins, it binds directly to the 5'-end of the 23S rRNA, where it nucleates assembly of the 50S subunit. Its function is as follows. One of the proteins that surrounds the polypeptide exit tunnel on the outside of the subunit. This is Large ribosomal subunit protein uL24 from Anaeromyxobacter dehalogenans (strain 2CP-1 / ATCC BAA-258).